The chain runs to 312 residues: CD-NTase-associated protein 12 (312 aa).

In terms of domain architecture, TIR spans 5-127; it reads RLFIGSSSEE…FNGLTLARFD (123 aa).

This sequence in the C-terminal section; belongs to the bacterial STING family. As to quaternary structure, forms homodimers; in the presence of c-di-GMP forms filaments with an ordered array of parallel-stacked subunits.

The catalysed reaction is NAD(+) + H2O = ADP-D-ribose + nicotinamide + H(+). With respect to regulation, NAD(+) hydrolase activity is strongly stimulated by c-di-GMP, weakly by 3'3'-cGAMP, very weakly by c-di-AMP but not at all by 2'3'-cGAMP. Self-association of TIR domains is required for NADase activity. Functionally, effector protein of a CBASS antiviral system with NAD(+) hydrolase activity. CBASS (cyclic oligonucleotide-based antiphage signaling system) provides immunity against bacteriophage. The CD-NTase protein synthesizes cyclic nucleotides in response to infection; these serve as specific second messenger signals. The signals activate a diverse range of effectors, leading to bacterial cell death and thus abortive phage infection. A type I-D CBASS(GG) system. In terms of biological role, binds c-di-GMP, does not bind cUMP-AMP. Upon activation by c-di-GMP forms filaments which hydrolyze NAD(+); filament formation is required for enzyme activation. The protein is CD-NTase-associated protein 12 of Niabella drilacis (strain DSM 25811 / CCM 8410 / CCUG 62505 / LMG 26954 / E90).